The chain runs to 345 residues: N-acetyl-gamma-glutamyl-phosphate reductase (345 aa).

The active site involves cysteine 149.

It belongs to the NAGSA dehydrogenase family. Type 1 subfamily.

The protein resides in the cytoplasm. The enzyme catalyses N-acetyl-L-glutamate 5-semialdehyde + phosphate + NADP(+) = N-acetyl-L-glutamyl 5-phosphate + NADPH + H(+). It participates in amino-acid biosynthesis; L-arginine biosynthesis; N(2)-acetyl-L-ornithine from L-glutamate: step 3/4. Functionally, catalyzes the NADPH-dependent reduction of N-acetyl-5-glutamyl phosphate to yield N-acetyl-L-glutamate 5-semialdehyde. The chain is N-acetyl-gamma-glutamyl-phosphate reductase from Bacillus cytotoxicus (strain DSM 22905 / CIP 110041 / 391-98 / NVH 391-98).